Reading from the N-terminus, the 197-residue chain is Dephospho-CoA kinase (197 aa).

The region spanning 2–197 is the DPCK domain; it reads RIGLTGGIAS…YDALAKTAHE (196 aa). Residue 10–15 coordinates ATP; the sequence is ASGKSL.

The protein belongs to the CoaE family.

Its subcellular location is the cytoplasm. The catalysed reaction is 3'-dephospho-CoA + ATP = ADP + CoA + H(+). Its pathway is cofactor biosynthesis; coenzyme A biosynthesis; CoA from (R)-pantothenate: step 5/5. Catalyzes the phosphorylation of the 3'-hydroxyl group of dephosphocoenzyme A to form coenzyme A. The chain is Dephospho-CoA kinase from Shouchella clausii (strain KSM-K16) (Alkalihalobacillus clausii).